Consider the following 177-residue polypeptide: ATP synthase subunit delta (177 aa).

It belongs to the ATPase delta chain family. F-type ATPases have 2 components, F(1) - the catalytic core - and F(0) - the membrane proton channel. F(1) has five subunits: alpha(3), beta(3), gamma(1), delta(1), epsilon(1). F(0) has three main subunits: a(1), b(2) and c(10-14). The alpha and beta chains form an alternating ring which encloses part of the gamma chain. F(1) is attached to F(0) by a central stalk formed by the gamma and epsilon chains, while a peripheral stalk is formed by the delta and b chains.

Its subcellular location is the cell inner membrane. Functionally, f(1)F(0) ATP synthase produces ATP from ADP in the presence of a proton or sodium gradient. F-type ATPases consist of two structural domains, F(1) containing the extramembraneous catalytic core and F(0) containing the membrane proton channel, linked together by a central stalk and a peripheral stalk. During catalysis, ATP synthesis in the catalytic domain of F(1) is coupled via a rotary mechanism of the central stalk subunits to proton translocation. This protein is part of the stalk that links CF(0) to CF(1). It either transmits conformational changes from CF(0) to CF(1) or is implicated in proton conduction. The chain is ATP synthase subunit delta from Enterobacter sp. (strain 638).